Reading from the N-terminus, the 564-residue chain is Keratin, type II cytoskeletal 6A (564 aa).

Residues 1–11 show a composition bias toward low complexity; that stretch reads MASTSTTIRSH. A disordered region spans residues 1-23; that stretch reads MASTSTTIRSHSSSRRGFSANSA. An N-acetylalanine modification is found at alanine 2. Residues 2–162 are head; that stretch reads ASTSTTIRSH…DPTIQRVRAE (161 aa). The coil 1A stretch occupies residues 163-198; that stretch reads EREQIKTLNNKFASFIDKVRFLEQQNKVLETKWTLL. One can recognise an IF rod domain in the interval 163–476; the sequence is EREQIKTLNN…KLLEGEECRL (314 aa). Residues 199-217 form a linker 1 region; it reads QEQGTKTVRQNLEPLFEQY. Residues 218–309 are coil 1B; that stretch reads INNLRRQLDS…ALYDAELSQM (92 aa). Positions 310–333 are linker 12; sequence QTHISDTSVVLSMDNNRNLDLDSI. The coil 2 stretch occupies residues 334–472; sequence IAEVKAQYEE…ATYRKLLEGE (139 aa). Residues 473 to 564 form a tail region; the sequence is ECRLNGEGVG…SSSSRKSYKH (92 aa).

This sequence belongs to the intermediate filament family. As to quaternary structure, heterodimer of a type I and a type II keratin. KRT6 isomers associate with KRT16 and/or KRT17. Interacts with TCHP. As to expression, expressed in the corneal epithelium (at protein level).

Epidermis-specific type I keratin involved in wound healing. Involved in the activation of follicular keratinocytes after wounding, while it does not play a major role in keratinocyte proliferation or migration. Participates in the regulation of epithelial migration by inhibiting the activity of SRC during wound repair. The chain is Keratin, type II cytoskeletal 6A (KRT6A) from Homo sapiens (Human).